The following is a 218-amino-acid chain: MKFFLDTASVSEIKRISELGLVDGVTTNPTIIAKEGRPFEEVIKEICSIVDGPVSAEVIGLEADKMVEEARILAKWAPNVVVKIPMTEEGLKAVHTLTAEGIKTNVTLIFTVSQGLMAAKAGATYISPFLGRLDDIGTDGMILIKNLKKVLDNYGLKAEIISASIRHIGHLEEAAEAGAHIATIPGSLFPKLWSHPLTDKGIEGFLKDWEAFSQKEGN.

Lys83 (schiff-base intermediate with substrate) is an active-site residue.

Belongs to the transaldolase family. Type 3B subfamily.

It localises to the cytoplasm. The catalysed reaction is D-sedoheptulose 7-phosphate + D-glyceraldehyde 3-phosphate = D-erythrose 4-phosphate + beta-D-fructose 6-phosphate. Its pathway is carbohydrate degradation; pentose phosphate pathway; D-glyceraldehyde 3-phosphate and beta-D-fructose 6-phosphate from D-ribose 5-phosphate and D-xylulose 5-phosphate (non-oxidative stage): step 2/3. Its function is as follows. Transaldolase is important for the balance of metabolites in the pentose-phosphate pathway. The chain is Probable transaldolase 2 from Listeria innocua serovar 6a (strain ATCC BAA-680 / CLIP 11262).